The chain runs to 158 residues: Protein OPG060 (158 aa).

This sequence belongs to the orthopoxvirus OPG058 family.

This chain is Protein OPG060 (OPG060), found in Cynomys gunnisoni (Gunnison's prairie dog).